Reading from the N-terminus, the 438-residue chain is Aspartate--tRNA(Asp) ligase (438 aa).

E170 contributes to the L-aspartate binding site. Residues 192-195 form an aspartate region; that stretch reads QLYK. L-aspartate is bound at residue R214. Residues 214–216, 222–224, and E361 each bind ATP; these read RAE and RHL. Residues E361 and S364 each contribute to the Mg(2+) site. L-aspartate-binding residues include S364 and R368. 409–412 serves as a coordination point for ATP; sequence GAER.

Belongs to the class-II aminoacyl-tRNA synthetase family. Type 2 subfamily. In terms of assembly, homodimer. It depends on Mg(2+) as a cofactor.

The protein resides in the cytoplasm. It carries out the reaction tRNA(Asp) + L-aspartate + ATP = L-aspartyl-tRNA(Asp) + AMP + diphosphate. Its function is as follows. Catalyzes the attachment of L-aspartate to tRNA(Asp) in a two-step reaction: L-aspartate is first activated by ATP to form Asp-AMP and then transferred to the acceptor end of tRNA(Asp). The chain is Aspartate--tRNA(Asp) ligase from Pyrococcus horikoshii (strain ATCC 700860 / DSM 12428 / JCM 9974 / NBRC 100139 / OT-3).